The primary structure comprises 162 residues: ATP synthase subunit delta, mitochondrial (162 aa).

Residues 1-25 constitute a mitochondrion transit peptide; the sequence is MSSLRLLASAARRATTHVAYTRRGY.

It belongs to the ATPase epsilon chain family. F-type ATPases have 2 components, CF(1) - the catalytic core - and CF(0) - the membrane proton channel. CF(1) has five subunits: alpha(3), beta(3), gamma(1), delta(1), epsilon(1). CF(0) has three main subunits: a, b and c.

It is found in the mitochondrion. It localises to the mitochondrion inner membrane. In terms of biological role, mitochondrial membrane ATP synthase (F(1)F(0) ATP synthase or Complex V) produces ATP from ADP in the presence of a proton gradient across the membrane which is generated by electron transport complexes of the respiratory chain. F-type ATPases consist of two structural domains, F(1) - containing the extramembraneous catalytic core, and F(0) - containing the membrane proton channel, linked together by a central stalk and a peripheral stalk. During catalysis, ATP turnover in the catalytic domain of F(1) is coupled via a rotary mechanism of the central stalk subunits to proton translocation. Part of the complex F(1) domain and of the central stalk which is part of the complex rotary element. Rotation of the central stalk against the surrounding alpha(3)beta(3) subunits leads to hydrolysis of ATP in three separate catalytic sites on the beta subunits. This chain is ATP synthase subunit delta, mitochondrial (atpD), found in Agaricus bisporus (White button mushroom).